The chain runs to 864 residues: Probable LRR receptor-like serine/threonine-protein kinase At1g07550 (864 aa).

The N-terminal stretch at 1–23 (MDTCTRLLFAACATLSILHLVQS) is a signal peptide. Residues 24–507 (QNQQGFISLD…SCGTRFPTAA (484 aa)) are Extracellular-facing. N-linked (GlcNAc...) asparagine glycosylation is found at Asn-49, Asn-229, Asn-256, Asn-289, Asn-432, Asn-445, and Asn-464. 3 LRR repeats span residues 411-434 (RIVK…QNLT), 435-457 (QLQE…LAKM), and 459-480 (YLLV…ALLD). The chain crosses the membrane as a helical span at residues 508 to 528 (VAASVSAVAIIILVLVLIFVL). Topologically, residues 529-864 (RRRKPSAGKV…VDTEINPKAR (336 aa)) are cytoplasmic. Residue Thr-551 is modified to Phosphothreonine. The Protein kinase domain maps to 560–831 (NNFQVVIGKG…QVVHVLNECL (272 aa)). ATP contacts are provided by residues 566 to 574 (IGKGGFGVV) and Lys-587. Tyr-632 carries the phosphotyrosine modification. The Proton acceptor role is filled by Asp-684. Thr-718 and Thr-723 each carry phosphothreonine. A Phosphotyrosine modification is found at Tyr-731.

This sequence belongs to the protein kinase superfamily. Ser/Thr protein kinase family.

It localises to the membrane. The catalysed reaction is L-seryl-[protein] + ATP = O-phospho-L-seryl-[protein] + ADP + H(+). The enzyme catalyses L-threonyl-[protein] + ATP = O-phospho-L-threonyl-[protein] + ADP + H(+). The sequence is that of Probable LRR receptor-like serine/threonine-protein kinase At1g07550 from Arabidopsis thaliana (Mouse-ear cress).